A 298-amino-acid polypeptide reads, in one-letter code: Protoheme IX farnesyltransferase (298 aa).

Helical transmembrane passes span 24 to 44 (VIQL…PGLP), 49 to 69 (LQLA…AAAF), 100 to 120 (LLFS…WVNP), 121 to 141 (LTMW…TVIL), 149 to 169 (IVIG…AMAG), 175 to 195 (ALIL…ALAL), 220 to 240 (LMVL…YVYG), 244 to 264 (WLYL…AFYL), and 277 to 297 (FRFS…DHYL).

This sequence belongs to the UbiA prenyltransferase family. Protoheme IX farnesyltransferase subfamily.

It is found in the cell inner membrane. It catalyses the reaction heme b + (2E,6E)-farnesyl diphosphate + H2O = Fe(II)-heme o + diphosphate. The protein operates within porphyrin-containing compound metabolism; heme O biosynthesis; heme O from protoheme: step 1/1. In terms of biological role, converts heme B (protoheme IX) to heme O by substitution of the vinyl group on carbon 2 of heme B porphyrin ring with a hydroxyethyl farnesyl side group. This Albidiferax ferrireducens (strain ATCC BAA-621 / DSM 15236 / T118) (Rhodoferax ferrireducens) protein is Protoheme IX farnesyltransferase.